The chain runs to 254 residues: 5-oxoprolinase subunit A (254 aa).

It belongs to the LamB/PxpA family. As to quaternary structure, forms a complex composed of PxpA, PxpB and PxpC.

The catalysed reaction is 5-oxo-L-proline + ATP + 2 H2O = L-glutamate + ADP + phosphate + H(+). Functionally, catalyzes the cleavage of 5-oxoproline to form L-glutamate coupled to the hydrolysis of ATP to ADP and inorganic phosphate. The polypeptide is 5-oxoprolinase subunit A (Burkholderia ambifaria (strain MC40-6)).